The following is a 267-amino-acid chain: Alpha carbonic anhydrase 4 (267 aa).

Residues 1-26 form the signal peptide; it reads MDTNAKTIFFMAMCFIYLSFPNISHA. N-linked (GlcNAc...) asparagine glycosylation is present at Asn22. An Alpha-carbonic anhydrase domain is found at 34 to 264; that stretch reads TPFTYEQKTE…SKGRSVWFYD (231 aa). The cysteines at positions 59 and 214 are disulfide-linked. His99 acts as the Proton acceptor in catalysis. Residues His125 and His127 each coordinate Zn(2+). An N-linked (GlcNAc...) asparagine glycan is attached at Asn135. His144 contacts Zn(2+). 210–211 contributes to the substrate binding site; sequence TV.

This sequence belongs to the alpha-class carbonic anhydrase family. It depends on Zn(2+) as a cofactor. Post-translationally, N-glycosylated.

Its subcellular location is the plastid. It is found in the chloroplast stroma. The catalysed reaction is hydrogencarbonate + H(+) = CO2 + H2O. Its function is as follows. Reversible hydration of carbon dioxide. The protein is Alpha carbonic anhydrase 4 (ACA4) of Arabidopsis thaliana (Mouse-ear cress).